The primary structure comprises 300 residues: Tyrosine recombinase XerC (300 aa).

Residues 2–88 enclose the Core-binding (CB) domain; sequence ENVNFTLNLF…SLRSFYKFLL (87 aa). One can recognise a Tyr recombinase domain in the interval 109 to 294; the sequence is KIPHFLYPDE…TKDHLRYVYL (186 aa). Residues arginine 149, lysine 173, histidine 246, arginine 249, and histidine 272 contribute to the active site. The active-site O-(3'-phospho-DNA)-tyrosine intermediate is the tyrosine 281.

Belongs to the 'phage' integrase family. XerC subfamily. In terms of assembly, forms a cyclic heterotetrameric complex composed of two molecules of XerC and two molecules of XerD.

The protein resides in the cytoplasm. Functionally, site-specific tyrosine recombinase, which acts by catalyzing the cutting and rejoining of the recombining DNA molecules. The XerC-XerD complex is essential to convert dimers of the bacterial chromosome into monomers to permit their segregation at cell division. It also contributes to the segregational stability of plasmids. In Anoxybacillus flavithermus (strain DSM 21510 / WK1), this protein is Tyrosine recombinase XerC.